The chain runs to 254 residues: Large ribosomal subunit protein uL2 (254 aa).

This sequence belongs to the universal ribosomal protein uL2 family.

This is Large ribosomal subunit protein uL2 (RPL2) from Eremothecium gossypii (strain ATCC 10895 / CBS 109.51 / FGSC 9923 / NRRL Y-1056) (Yeast).